A 515-amino-acid polypeptide reads, in one-letter code: Bifunctional purine biosynthesis protein PurH (515 aa).

In terms of domain architecture, MGS-like spans 1-145 (MTKRALISVS…KNHASVTVVV (145 aa)).

The protein belongs to the PurH family.

It catalyses the reaction (6R)-10-formyltetrahydrofolate + 5-amino-1-(5-phospho-beta-D-ribosyl)imidazole-4-carboxamide = 5-formamido-1-(5-phospho-D-ribosyl)imidazole-4-carboxamide + (6S)-5,6,7,8-tetrahydrofolate. The catalysed reaction is IMP + H2O = 5-formamido-1-(5-phospho-D-ribosyl)imidazole-4-carboxamide. Its pathway is purine metabolism; IMP biosynthesis via de novo pathway; 5-formamido-1-(5-phospho-D-ribosyl)imidazole-4-carboxamide from 5-amino-1-(5-phospho-D-ribosyl)imidazole-4-carboxamide (10-formyl THF route): step 1/1. It participates in purine metabolism; IMP biosynthesis via de novo pathway; IMP from 5-formamido-1-(5-phospho-D-ribosyl)imidazole-4-carboxamide: step 1/1. This chain is Bifunctional purine biosynthesis protein PurH, found in Streptococcus equi subsp. zooepidemicus (strain H70).